Reading from the N-terminus, the 805-residue chain is MASPSGQYIFGEFSDDEFKQFFVTARCTVELPPYNEHFFPCGPQSSVDFQDDMHLKFSEVIHGISGEECPRIEFGIEQVVDRDTALNNNTDYSISSNLNPQAPEFILTCSSFPKTSNNVLHENNFDAINCQFSESAIPDGSGNADSDGTSGTGQRERKKKKKRPPGYYSYLEGVGDVPSETLVNGHANSTGLDSISTDDPDLADDIPISTTSPRTCTSPDNFVDLINEALSDEASMHNVLDNARTAGQPEECSVTSSEQSCIPSDNGSESPVRTAVVQPFAGTDTTENLGVTNGQTLESPEEDTVSNGVVLHPEVSSFSEEVKTEETSTAQALIHLSGSASSNPPAKSWASLFHTSKPSSSPQVAYVETKNAPTVVSPQVPEKQVEIKEEPVPVSDDPVAIEFAELLEEVKLVHKPVSLQPRGLINKGNWCYINATLQALVACPPMYHLMKSIPVYTKAQRPCTSTPMIDSFVRLMNEFTNMPILPKAKQAPGEKVIKDIRPGAPFEPTYIYRLLTVFKSSLSEKGRQEDAEEYLGFILNGLHEEMLALKKLLLPQNDQIHINNCPNPVSGVEEVNKEEQEGSDEEWEQVGPRNKSSVTRQADFVQTPITDIFGGHMRSVVYQQSSKESATLQPFFTLQLDIQSEKIRTVQDALESLVARESVQGYTTKTKQEVEICRRVTLEELPPVLVLHLKRFVFEKTGGCQKLIKNIEYPVDLEVSKDLLSPGVKSKIFKGQRTYRLFAVVYHHGNSATGGHYTTDVFQIGLNGWLRIDDQSVKVINQYQVVKQTVERTAYLLYYRRVDLL.

2 disordered regions span residues 136-173 (AIPD…YLEG) and 284-305 (DTTE…EDTV). Composition is skewed to polar residues over residues 143–153 (NADSDGTSGTG) and 284–298 (DTTE…QTLE). The region spanning 422 to 802 (RGLINKGNWC…TAYLLYYRRV (381 aa)) is the USP domain. The Nucleophile role is filled by cysteine 431. A disordered region spans residues 573–600 (EEVNKEEQEGSDEEWEQVGPRNKSSVTR). Histidine 756 functions as the Proton acceptor in the catalytic mechanism.

The protein belongs to the peptidase C19 family. USP10 subfamily.

Its subcellular location is the cytoplasm. It is found in the nucleus. It carries out the reaction Thiol-dependent hydrolysis of ester, thioester, amide, peptide and isopeptide bonds formed by the C-terminal Gly of ubiquitin (a 76-residue protein attached to proteins as an intracellular targeting signal).. Hydrolase that can remove conjugated ubiquitin from target proteins such as p53/tp53, rps2/us5, rps3/us3, rps10/eS10, becn1, snx3 and cftr. Acts as an essential regulator of p53/tp53 stability: in unstressed cells, specifically deubiquitinates p53/tp53 in the cytoplasm, leading to counteracts MDM2 action and stabilize p53/tp53. Following DNA damage, translocates to the nucleus and deubiquitinates p53/tp53, leading to regulate the p53/TP53-dependent DNA damage response. Component of a regulatory loop that controls autophagy and p53/tp53 levels. Plays a key role in 40S ribosome subunit recycling when a ribosome has stalled during translation: acts both by inhibiting formation of stress granules, which store stalled translation pre-initiation complexes, and mediating deubiquitination of 40S ribosome subunits. Deubiquitinates cftr in early endosomes, enhancing its endocytic recycling. The chain is Ubiquitin carboxyl-terminal hydrolase 10-B (usp10-b) from Xenopus laevis (African clawed frog).